Reading from the N-terminus, the 329-residue chain is Anthranilate phosphoribosyltransferase (329 aa).

5-phospho-alpha-D-ribose 1-diphosphate-binding positions include Gly-78, Gly-81 to Asp-82, Thr-86, Asn-88 to Thr-91, Lys-106 to Gly-114, and Ser-118. Gly-78 provides a ligand contact to anthranilate. Position 90 (Ser-90) interacts with Mg(2+). Asn-109 provides a ligand contact to anthranilate. Arg-164 is a binding site for anthranilate. The Mg(2+) site is built by Asp-221 and Glu-222.

The protein belongs to the anthranilate phosphoribosyltransferase family. In terms of assembly, homodimer. Requires Mg(2+) as cofactor.

The enzyme catalyses N-(5-phospho-beta-D-ribosyl)anthranilate + diphosphate = 5-phospho-alpha-D-ribose 1-diphosphate + anthranilate. It functions in the pathway amino-acid biosynthesis; L-tryptophan biosynthesis; L-tryptophan from chorismate: step 2/5. Catalyzes the transfer of the phosphoribosyl group of 5-phosphorylribose-1-pyrophosphate (PRPP) to anthranilate to yield N-(5'-phosphoribosyl)-anthranilate (PRA). The protein is Anthranilate phosphoribosyltransferase of Pyrobaculum islandicum (strain DSM 4184 / JCM 9189 / GEO3).